Reading from the N-terminus, the 274-residue chain is Penicillin-insensitive murein endopeptidase (274 aa).

Positions Met1–Ala19 are cleaved as a signal peptide. 3 disulfides stabilise this stretch: Cys44–Cys265, Cys187–Cys235, and Cys216–Cys223. Residues His110, His113, Asp120, Asp147, His150, and His211 each coordinate Zn(2+). A disordered region spans residues Pro227–Ile274.

Belongs to the peptidase M74 family. As to quaternary structure, dimer. The cofactor is Zn(2+).

It localises to the periplasm. In terms of biological role, murein endopeptidase that cleaves the D-alanyl-meso-2,6-diamino-pimelyl amide bond that connects peptidoglycan strands. Likely plays a role in the removal of murein from the sacculus. The polypeptide is Penicillin-insensitive murein endopeptidase (Escherichia coli O9:H4 (strain HS)).